The chain runs to 238 residues: Small ribosomal subunit protein eS4 (238 aa).

The S4 RNA-binding domain occupies 38–100 (LPLAIVIRDV…TGEVYRVVPD (63 aa)).

This sequence belongs to the eukaryotic ribosomal protein eS4 family.

The polypeptide is Small ribosomal subunit protein eS4 (Pyrobaculum arsenaticum (strain DSM 13514 / JCM 11321 / PZ6)).